The primary structure comprises 91 residues: Hepcidin-2 (91 aa).

Positions 1-24 (MKLSNVFLAAVVILTCVCVFQITA) are cleaved as a signal peptide. The propeptide occupies 25 to 64 (VPFIQQVQDEHHVESEELQENQHLTEAEHRLTDPLVLFRT). Intrachain disulfides connect Cys73–Cys89, Cys76–Cys79, Cys77–Cys85, and Cys80–Cys88.

The protein belongs to the hepcidin family.

Its subcellular location is the secreted. Seems to act as a signaling molecule involved in the maintenance of iron homeostasis. Seems to be required in conjunction with HFE to regulate both intestinal iron absorption and iron storage in macrophages. May also have antimicrobial activity. In Danio rerio (Zebrafish), this protein is Hepcidin-2 (hamp2).